Consider the following 62-residue polypeptide: Large ribosomal subunit protein uL29 (62 aa).

The protein belongs to the universal ribosomal protein uL29 family.

The protein is Large ribosomal subunit protein uL29 of Geobacter metallireducens (strain ATCC 53774 / DSM 7210 / GS-15).